A 463-amino-acid polypeptide reads, in one-letter code: MMKIFNTLKNKKEKFKPINSNIVNVYVCGITPYDLCHIGHARTLVFFDIMIKYFQYKGYRTNYIRNITDIDDKIINKAFHKKEKYNLLSDFMIKEMKYDLNSLNIMPPNNEPRVTNHISDILEMIKILLEKKHAYISKTGDVVFDISTYRDYGKLSKRFEEKKQLLNNKKNKINFKTKKEKDFVLWKMSKPNEPSWKSPWGHGRPGWHIECSAISDKTLGNIFDIHGGGSDLIFPHHENEIAQSKCANSKFNVNFWVHTGMVMFKKEKMSKSLGNSCLIREIVKKYDADTLKYFLTSSHYRSQITYSVDNMEKSKSAVKRLYRSLHNTNYFYNLPIKEKFTSKFIDAMNDDFNTPKAYSVLFSISRQINYFKNKNPEKANQLSTVLKNLSNIIGILNENPDSYLNNKLKFSKDKINKIKSIIKKRENYRKLKQWEKADEERKKLKYIGVCLEDTIQGTKWFKL.

A Zn(2+)-binding site is contributed by C28. Residues 30–40 (ITPYDLCHIGH) carry the 'HIGH' region motif. Residues C211, H236, and E240 each contribute to the Zn(2+) site. A 'KMSKS' region motif is present at residues 268 to 272 (KMSKS). Residue K271 participates in ATP binding.

Belongs to the class-I aminoacyl-tRNA synthetase family. As to quaternary structure, monomer. Zn(2+) serves as cofactor.

It is found in the cytoplasm. It carries out the reaction tRNA(Cys) + L-cysteine + ATP = L-cysteinyl-tRNA(Cys) + AMP + diphosphate. This is Cysteine--tRNA ligase from Wigglesworthia glossinidia brevipalpis.